Here is a 367-residue protein sequence, read N- to C-terminus: Ribosomal lysine N-methyltransferase 5 (367 aa).

Positions 55–74 are disordered; the sequence is EGGRKKKRVRRRNKASSVEE. Basic residues predominate over residues 58 to 68; the sequence is RKKKRVRRRNK. S-adenosyl-L-methionine contacts are provided by residues tryptophan 110, 170-172, aspartate 192, tryptophan 256, and methionine 288; that span reads GAG.

The protein belongs to the class I-like SAM-binding methyltransferase superfamily. RKM5 family.

In terms of biological role, S-adenosyl-L-methionine-dependent protein-lysine N-methyltransferase that monomethylates 60S ribosomal protein L1 (RPL1A and RPL1B) at 'Lys-46'. The polypeptide is Ribosomal lysine N-methyltransferase 5 (RKM5) (Saccharomyces cerevisiae (strain AWRI796) (Baker's yeast)).